The primary structure comprises 249 residues: Aspartate/glutamate leucyltransferase (249 aa).

It belongs to the R-transferase family. Bpt subfamily.

The protein resides in the cytoplasm. It catalyses the reaction N-terminal L-glutamyl-[protein] + L-leucyl-tRNA(Leu) = N-terminal L-leucyl-L-glutamyl-[protein] + tRNA(Leu) + H(+). The catalysed reaction is N-terminal L-aspartyl-[protein] + L-leucyl-tRNA(Leu) = N-terminal L-leucyl-L-aspartyl-[protein] + tRNA(Leu) + H(+). In terms of biological role, functions in the N-end rule pathway of protein degradation where it conjugates Leu from its aminoacyl-tRNA to the N-termini of proteins containing an N-terminal aspartate or glutamate. The polypeptide is Aspartate/glutamate leucyltransferase (Brucella canis (strain ATCC 23365 / NCTC 10854 / RM-666)).